Consider the following 305-residue polypeptide: Sulfate adenylyltransferase subunit 2 (305 aa).

This sequence belongs to the PAPS reductase family. CysD subfamily. Heterodimer composed of CysD, the smaller subunit, and CysN.

It catalyses the reaction sulfate + ATP + H(+) = adenosine 5'-phosphosulfate + diphosphate. It functions in the pathway sulfur metabolism; hydrogen sulfide biosynthesis; sulfite from sulfate: step 1/3. Its function is as follows. With CysN forms the ATP sulfurylase (ATPS) that catalyzes the adenylation of sulfate producing adenosine 5'-phosphosulfate (APS) and diphosphate, the first enzymatic step in sulfur assimilation pathway. APS synthesis involves the formation of a high-energy phosphoric-sulfuric acid anhydride bond driven by GTP hydrolysis by CysN coupled to ATP hydrolysis by CysD. The sequence is that of Sulfate adenylyltransferase subunit 2 from Pseudomonas entomophila (strain L48).